Reading from the N-terminus, the 113-residue chain is Dynein light chain Tctex-type 1 (113 aa).

Methionine 1 is modified (N-acetylmethionine). An interaction with GNB1 region spans residues 41–113 (QWTTNVVEQT…CIVSAFGLSI (73 aa)).

This sequence belongs to the dynein light chain Tctex-type family. Homodimer. The cytoplasmic dynein 1 complex consists of two catalytic heavy chains (HCs) and a number of non-catalytic subunits presented by intermediate chains (ICs), light intermediate chains (LICs) and light chains (LCs); the composition seems to vary in respect to the IC, LIC and LC composition. The heavy chain homodimer serves as a scaffold for the probable homodimeric assembly of the non-catalytic subunits. The ICs and LICs bind directly to the HC dimer and the LCs assemble on the IC dimer. DYNLT1 and DYNLT3 compete for association with dynein IC (DYNC1I1 or DYNC1I2). Self-associates. Interacts with RHO. Interacts with DYNC1I1 and DYNC1I2. Interacts with DOC2A, DOC2B and SCN10A. Interacts with PVR. Interacts with SVIL isoform 2. Interacts with GNB1; the interaction occurs in presence of guanine nucleotide-binding protein G(T) subunit gamma; the interaction diminishes the association of DYNLT1 with dynein IC (DYNC1I1 or DYNC1I2). Interacts with GNB2, GNB3 and GNB5; the interactions occur in presence of guanine nucleotide-binding protein G(T) subunit gamma. Interacts with ACVR2B and ARHGEF2. Interacts with DNAI4. Interacts with CFAP61. Phosphorylated by BMPR2. The phosphorylation status is proposed to regulate the association with the cytoplasmic dynein complex and may have role in cytoplasmic dynein cargo release.

It localises to the golgi apparatus. The protein localises to the cytoplasm. It is found in the cytoskeleton. Its subcellular location is the spindle. Its function is as follows. Acts as one of several non-catalytic accessory components of the cytoplasmic dynein 1 complex that are thought to be involved in linking dynein to cargos and to adapter proteins that regulate dynein function. Cytoplasmic dynein 1 acts as a motor for the intracellular retrograde motility of vesicles and organelles along microtubules. Binds to transport cargos and is involved in apical cargo transport such as rhodopsin-bearing vesicles in polarized epithelia. May also be a accessory component of axonemal dynein. Plays a role in neuronal morphogenesis; the function is independent of cytoplasmic dynein and seems to be coupled to regulation of the actin cytoskeleton by enhancing Rac1 activity. The function in neurogenesis may be regulated by association with a G-protein beta-gamma dimer. May function as a receptor-independent activator of heterotrimeric G-protein signaling; the activation appears to be independent of a nucleotide exchange. Plays a role in regulating neurogenesis; inhibits the genesis of neurons from precursor cells during cortical development presumably by antagonizing ARHGEF2. Involved in the regulation of mitotic spindle orientation. Unrelated to the role in retrograde microtubule-associated movement may play a role in the dimerization of cytoplasmic proteins/domains such as for ACVR2B. Binds to the cytoplasmic domain of ACVR2B and, in vitro, inhibits ACVR2B signaling. This Bos taurus (Bovine) protein is Dynein light chain Tctex-type 1 (DYNLT1).